We begin with the raw amino-acid sequence, 201 residues long: LexA repressor (201 aa).

A DNA-binding region (H-T-H motif) is located at residues 29-49 (VREICKAVGLSSTSSVHFHLK). Residues S125 and K162 each act as for autocatalytic cleavage activity in the active site.

It belongs to the peptidase S24 family. Homodimer.

It carries out the reaction Hydrolysis of Ala-|-Gly bond in repressor LexA.. Represses a number of genes involved in the response to DNA damage (SOS response), including recA and lexA. In the presence of single-stranded DNA, RecA interacts with LexA causing an autocatalytic cleavage which disrupts the DNA-binding part of LexA, leading to derepression of the SOS regulon and eventually DNA repair. This chain is LexA repressor, found in Clostridium botulinum (strain 657 / Type Ba4).